The chain runs to 201 residues: Protein CD300H (201 aa).

A signal peptide spans 1 to 24; that stretch reads MTQRAGAAMLPSALLLLCVPGCLT. In terms of domain architecture, Ig-like V-type spans 25-123; it reads VSGPSTVMGA…ATILQEDGLS (99 aa). Over 25-168 the chain is Extracellular; it reads VSGPSTVMGA…CQGSLPSSTC (144 aa). Cys43 and Cys111 are oxidised to a cystine. Asn100 is a glycosylation site (N-linked (GlcNAc...) asparagine). A helical transmembrane segment spans residues 169-189; sequence FLLLPLLKVPLLLSILGAILW. Residues 190–201 are Cytoplasmic-facing; that stretch reads VNRPWRTPWTES.

This sequence belongs to the CD300 family. In terms of assembly, interacts with TYROBP and HCST. Expressed on CD16+ monocytes and myeloid dendritic cells (at protein level). By contrast, not detected in lymphocytes nor granulocytes (at protein level).

Its subcellular location is the membrane. It is found in the secreted. In terms of biological role, may play an important role in innate immunity by mediating a signal for the production of a neutrophil chemoattractant. The chain is Protein CD300H from Homo sapiens (Human).